The following is a 328-amino-acid chain: 2,4-dinitroanisole O-demethylase subunit alpha (328 aa).

A propeptide spanning residues 1-9 is cleaved from the precursor; it reads MSVTSQTSS. Positions 101, 103, 105, 168, 225, and 247 each coordinate Zn(2+).

Belongs to the metallo-beta-lactamase superfamily. In terms of assembly, part of the complex DnhAB composed of the 2,4-dinitroanisole O-demethylase alpha (DnhA) and beta (DnhB) subunits. The cofactor is Zn(2+).

It carries out the reaction 2,4-dinitroanisole + H2O = 2,4-dinitrophenol + methanol + H(+). Its function is as follows. Involved in the degradation of 2,4-dinitroanisole (DNAN), an insensitive munition ingredient used in explosive formulations as a replacement for 2,4,6-trinitrotoluene (TNT). Catalyzes the removal of the methyl group from 2,4-dinitroanisole (DNAN) to yield 2,4-dinitrophenol (2,4-DNP) and methanol. The polypeptide is 2,4-dinitroanisole O-demethylase subunit alpha (Nocardioides sp. (strain JS1661)).